Reading from the N-terminus, the 352-residue chain is tRNA N6-adenosine threonylcarbamoyltransferase (352 aa).

Positions 115 and 119 each coordinate Fe cation. Substrate is bound by residues 138-142, Asp-171, Gly-184, and Asn-277; that span reads LVSGG. Asp-305 serves as a coordination point for Fe cation.

This sequence belongs to the KAE1 / TsaD family. Fe(2+) is required as a cofactor.

The protein resides in the cytoplasm. It catalyses the reaction L-threonylcarbamoyladenylate + adenosine(37) in tRNA = N(6)-L-threonylcarbamoyladenosine(37) in tRNA + AMP + H(+). Its function is as follows. Required for the formation of a threonylcarbamoyl group on adenosine at position 37 (t(6)A37) in tRNAs that read codons beginning with adenine. Is involved in the transfer of the threonylcarbamoyl moiety of threonylcarbamoyl-AMP (TC-AMP) to the N6 group of A37, together with TsaE and TsaB. TsaD likely plays a direct catalytic role in this reaction. The sequence is that of tRNA N6-adenosine threonylcarbamoyltransferase from Variovorax paradoxus (strain S110).